A 143-amino-acid polypeptide reads, in one-letter code: Transthyretin-like protein 33 (143 aa).

An N-terminal signal peptide occupies residues 1-20; the sequence is MSRLACISSLFILCAIGSEA.

It belongs to the nematode transthyretin-like family. As to expression, expressed in head cells next to and anterior of the first pharyngeal bulb, the pharynx, and the hypodermis.

The protein localises to the secreted. Protects dopaminergic neurons from degeneration caused by oxidative stress. The polypeptide is Transthyretin-like protein 33 (Caenorhabditis elegans).